A 594-amino-acid polypeptide reads, in one-letter code: UvrABC system protein C (594 aa).

A GIY-YIG domain is found at 14–91 (DQPGCYLMKD…IKKHDPKYNI (78 aa)). One can recognise a UVR domain in the interval 196–231 (KEVRSELETKMYEASEKLEFERAKELRDQIAHIDAI).

It belongs to the UvrC family. In terms of assembly, interacts with UvrB in an incision complex.

It localises to the cytoplasm. Its function is as follows. The UvrABC repair system catalyzes the recognition and processing of DNA lesions. UvrC both incises the 5' and 3' sides of the lesion. The N-terminal half is responsible for the 3' incision and the C-terminal half is responsible for the 5' incision. The protein is UvrABC system protein C of Bacillus anthracis (strain A0248).